Reading from the N-terminus, the 1564-residue chain is Tetratricopeptide repeat protein 37 (1564 aa).

TPR repeat units lie at residues 6 to 39 (VKAI…EKNN), 40 to 73 (YNAW…EPDQ), 75 to 110 (LAWQ…YRSS), 116 to 149 (YEIC…KEDE), 237 to 271 (IYPL…DPLN), 306 to 339 (PSAW…ATQD), 420 to 453 (AEGH…KPEN), 456 to 492 (YHYY…DPFM), 493 to 527 (SRAF…DDSD), 564 to 597 (KWAW…DPKD), 598 to 631 (SNCW…NPDS), 633 to 665 (YSVY…SGEY), 678 to 713 (MLAK…RPDL), 743 to 776 (LLGN…QSTA), 861 to 894 (VAAW…DPLY), 980 to 1013 (RTAF…LQER), 1020 to 1050 (NSAL…PLTE), 1051 to 1084 (FDDL…AKSD), and 1400 to 1433 (HNAW…ASQQ).

In Xenopus laevis (African clawed frog), this protein is Tetratricopeptide repeat protein 37 (ttc37).